The chain runs to 347 residues: Methylthioribose-1-phosphate isomerase (347 aa).

Substrate is bound by residues 47–49, Arg90, and Gln199; that span reads RGA. Residue Asp240 is the Proton donor of the active site. 250–251 contacts substrate; the sequence is NK.

This sequence belongs to the eIF-2B alpha/beta/delta subunits family. MtnA subfamily.

It catalyses the reaction 5-(methylsulfanyl)-alpha-D-ribose 1-phosphate = 5-(methylsulfanyl)-D-ribulose 1-phosphate. It participates in amino-acid biosynthesis; L-methionine biosynthesis via salvage pathway; L-methionine from S-methyl-5-thio-alpha-D-ribose 1-phosphate: step 1/6. Functionally, catalyzes the interconversion of methylthioribose-1-phosphate (MTR-1-P) into methylthioribulose-1-phosphate (MTRu-1-P). The sequence is that of Methylthioribose-1-phosphate isomerase from Natranaerobius thermophilus (strain ATCC BAA-1301 / DSM 18059 / JW/NM-WN-LF).